Reading from the N-terminus, the 131-residue chain is UPF0212 protein TK1194 (131 aa).

The protein belongs to the UPF0212 family.

In Thermococcus kodakarensis (strain ATCC BAA-918 / JCM 12380 / KOD1) (Pyrococcus kodakaraensis (strain KOD1)), this protein is UPF0212 protein TK1194.